Consider the following 347-residue polypeptide: Merozoite surface protein 2 (347 aa).

The signal sequence occupies residues 1–20 (MKVIKTLSIINFFIFVTFNI). Asn-22 and Asn-36 each carry an N-linked (GlcNAc...) asparagine glycan. A polymorphic region region spans residues 44-273 (AESKPPTGDG…EQTESPELQS (230 aa)). A run of 22 repeats spans residues 53 to 60 (GAVASAGN), 61 to 68 (GAVASAGN), 69 to 76 (GAVASAGN), 77 to 84 (GAVASAGN), 85 to 88 (GAGN), 89 to 92 (GAGN), 93 to 96 (GAGN), 97 to 100 (GAGN), 101 to 104 (GAGN), 105 to 108 (GAGN), 109 to 112 (GAGN), 113 to 116 (GAGN), 117 to 120 (GAGN), 121 to 124 (GAGN), 125 to 128 (GAGN), 129 to 132 (GAGN), 133 to 136 (GAGN), 137 to 140 (GAGN), 141 to 144 (GAGN), 145 to 152 (GAVASAGN), 153 to 156 (GAGN), and 157 to 164 (GAVASAGN). The tract at residues 53–164 (GAVASAGNGA…GNGAVASAGN (112 aa)) is 6 X 8 AA repeats of G-A-V-A-S-A-G-N. Residues 85-156 (GAGNGAGNGA…VASAGNGAGN (72 aa)) are 16 X 4 AA repeats of G-A-G-N. Residues 165–206 (GAVAERSSSTPATTTTTTTTNDAEASTSTSSENSNHNNAETN) show a composition bias toward low complexity. The interval 165-308 (GAVAERSSST…DSQKECTDGN (144 aa)) is disordered. Polar residues-rich tracts occupy residues 213–240 (VQPNQANKETQNNSNVQQDSQTKSNVPR) and 247–275 (KSPTAQPEQAENSAPTAEQTESPELQSAP). N-linked (GlcNAc...) asparagine glycosylation occurs at Asn-224. Asn-296 carries an N-linked (GlcNAc...) asparagine glycan. Cys-304 and Cys-312 are joined by a disulfide. Residues Asn-320 and Asn-321 are each glycosylated (N-linked (GlcNAc...) asparagine). The GPI-anchor amidated asparagine moiety is linked to residue Asn-321. The propeptide at 322–347 (SSNIASINKFVVLISATLVLSFAIFI) is removed in mature form.

Its subcellular location is the cell membrane. Its function is as follows. May play a role in the merozoite attachment to the erythrocyte. The protein is Merozoite surface protein 2 of Plasmodium falciparum (isolate Nig32 / Nigeria).